The following is a 430-amino-acid chain: Serine/threonine-protein kinase Sgk1 (430 aa).

A necessary for localization to the mitochondria region spans residues 1-60 (MTVKTEAARSTLTYSRMRGMVAILIAFMKQRRMGLNDFIQKLANNSYACKHPEVQSYLKI). Positions 66–92 (PELMNANPSPPPSPSQQINLGPSSNPH) are disordered. Residue Ser74 is modified to Phosphoserine. Phosphoserine; by MAPK7 is present on Ser78. Polar residues predominate over residues 81–91 (QQINLGPSSNP). A Protein kinase domain is found at 98 to 354 (FHFLKVIGKG…FMEIKSHIFF (257 aa)). ATP-binding positions include 104 to 112 (IGKGSFGKV) and Lys127. The Nuclear localization signal signature appears at 131–141 (KKAILKKKEEK). Asp222 serves as the catalytic Proton acceptor. Residue Thr256 is modified to Phosphothreonine; by PDPK1. The AGC-kinase C-terminal domain maps to 355–430 (SLINWDDLIN…SYAPPMDSFL (76 aa)). Thr368 carries the post-translational modification Phosphothreonine; by PKA. Ser396, Ser400, and Ser421 each carry phosphoserine.

It belongs to the protein kinase superfamily. AGC Ser/Thr protein kinase family. Homodimer; disulfide-linked. Forms a trimeric complex with FBXW7 and NOTCH1. Interacts with MAPK3/ERK1, MAPK1/ERK2, MAP2K1/MEK1, MAP2K2/MEK2, NEDD4, NEDD4L, MAPK7, CREB1, SLC9A3R2/NHERF2 and KCNJ1/ROMK1. Associates with the mammalian target of rapamycin complex 2 (mTORC2) via an interaction with MAPKAP1/SIN1. Interacts with MAPT/TAU. Post-translationally, regulated by phosphorylation. Activated by phosphorylation on Ser-421 by mTORC2, transforming it into a substrate for PDPK1 which phosphorylates it on Thr-256. Phosphorylation on Ser-396 and Ser-400 are also essential for its activity. Phosphorylation on Ser-78 by MAPK7 is required for growth factor-induced cell cycle progression. In terms of processing, ubiquitinated by NEDD4L; which promotes proteasomal degradation. Ubiquitinated by SYVN1 at the endoplasmic reticulum; which promotes rapid proteasomal degradation and maintains a high turnover rate in resting cells. As to expression, expressed in most tissues with highest levels in the ovary, thymus and lung. In the kidney, expressed within glomeruli of the cortex, at low levels in outer medulla and moderate levels in inner medulla and papilla.

The protein resides in the cytoplasm. The protein localises to the nucleus. It localises to the endoplasmic reticulum membrane. It is found in the cell membrane. Its subcellular location is the mitochondrion. It catalyses the reaction L-seryl-[protein] + ATP = O-phospho-L-seryl-[protein] + ADP + H(+). The enzyme catalyses L-threonyl-[protein] + ATP = O-phospho-L-threonyl-[protein] + ADP + H(+). Its activity is regulated as follows. Two specific sites, one in the kinase domain (Thr-256) and the other in the C-terminal regulatory region (Ser-421), need to be phosphorylated for its full activation. Phosphorylation at Ser-396 and Ser-400 are also essential for its activity. Activated by WNK1, WNK2, WNK3 and WNK4. In terms of biological role, serine/threonine-protein kinase which is involved in the regulation of a wide variety of ion channels, membrane transporters, cellular enzymes, transcription factors, neuronal excitability, cell growth, proliferation, survival, migration and apoptosis. Plays an important role in cellular stress response. Contributes to regulation of renal Na(+) retention, renal K(+) elimination, salt appetite, gastric acid secretion, intestinal Na(+)/H(+) exchange and nutrient transport, insulin-dependent salt sensitivity of blood pressure, salt sensitivity of peripheral glucose uptake, cardiac repolarization and memory consolidation. Up-regulates Na(+) channels: SCNN1A/ENAC, SCN5A and ASIC1/ACCN2, K(+) channels: KCNJ1/ROMK1, KCNA1-5, KCNQ1-5 and KCNE1, epithelial Ca(2+) channels: TRPV5 and TRPV6, chloride channels: BSND, CLCN2 and CFTR, glutamate transporters: SLC1A3/EAAT1, SLC1A2 /EAAT2, SLC1A1/EAAT3, SLC1A6/EAAT4 and SLC1A7/EAAT5, amino acid transporters: SLC1A5/ASCT2, SLC38A1/SN1 and SLC6A19, creatine transporter: SLC6A8, Na(+)/dicarboxylate cotransporter: SLC13A2/NADC1, Na(+)-dependent phosphate cotransporter: SLC34A2/NAPI-2B, glutamate receptor: GRIK2/GLUR6. Up-regulates carriers: SLC9A3/NHE3, SLC12A1/NKCC2, SLC12A3/NCC, SLC5A3/SMIT, SLC2A1/GLUT1, SLC5A1/SGLT1 and SLC15A2/PEPT2. Regulates enzymes: GSK3A/B, PMM2 and Na(+)/K(+) ATPase, and transcription factors: CTNNB1 and nuclear factor NF-kappa-B. Stimulates sodium transport into epithelial cells by enhancing the stability and expression of SCNN1A/ENAC. This is achieved by phosphorylating the NEDD4L ubiquitin E3 ligase, promoting its interaction with 14-3-3 proteins, thereby preventing it from binding to SCNN1A/ENAC and targeting it for degradation. Regulates store-operated Ca(+2) entry (SOCE) by stimulating ORAI1 and STIM1. Regulates KCNJ1/ROMK1 directly via its phosphorylation or indirectly via increased interaction with SLC9A3R2/NHERF2. Phosphorylates MDM2 and activates MDM2-dependent ubiquitination of p53/TP53. Phosphorylates SLC2A4/GLUT4 and up-regulates its activity. Phosphorylates APBB1/FE65 and promotes its localization to the nucleus. Phosphorylates FBXW7 and plays an inhibitory role in the NOTCH1 signaling. Phosphorylates FOXO1 resulting in its relocalization from the nucleus to the cytoplasm. Phosphorylates FOXO3, promoting its exit from the nucleus and interference with FOXO3-dependent transcription. Phosphorylates BRAF and MAP3K3/MEKK3 and inhibits their activity. Phosphorylates SLC9A3/NHE3 in response to dexamethasone, resulting in its activation and increased localization at the cell membrane. Phosphorylates CREB1. Necessary for vascular remodeling during angiogenesis. Phosphorylates MAPT/TAU and mediates microtubule depolymerization and neurite formation in hippocampal neurons. Phosphorylates MAPK1/ERK2 and activates it by enhancing its interaction with MAP2K1/MEK1 and MAP2K2/MEK2. May also play an important role in the development of particular groups of neurons in the postnatal brain. The chain is Serine/threonine-protein kinase Sgk1 (Sgk1) from Rattus norvegicus (Rat).